Here is a 1489-residue protein sequence, read N- to C-terminus: FERM domain-containing protein C (1489 aa).

2 stretches are compositionally biased toward polar residues: residues 59–79 (DTES…NFNS) and 103–118 (NSPL…STSI). 4 disordered regions span residues 59-86 (DTES…HQHL), 103-197 (NSPL…PSTL), 252-271 (NSVQ…NNNN), and 277-312 (EQQQ…TPDS). Low complexity predominate over residues 131–153 (SSSSSSSDGDSNSSSDSSDNSSE). A compositionally biased stretch (basic residues) spans 163–172 (HLHLHRHHRK). The span at 181 to 195 (FESSSESSEQYGSPS) shows a compositional bias: low complexity. Residues 202–289 (ALKLEKIMQI…QEKQQQQQQH (88 aa)) adopt a coiled-coil conformation. Over residues 277–287 (EQQQEKQQQQQ) the composition is skewed to low complexity. The span at 303 to 312 (RSVSISTPDS) shows a compositional bias: polar residues. A coiled-coil region spans residues 356-383 (IKVSKVLEEEMQLQQEFEKQEQLRHSAR). Disordered regions lie at residues 396–435 (NLQD…ENQN), 459–479 (VITP…KILT), and 508–569 (EDPL…TTTT). Residues 421–435 (ENVSNDNSSDNENQN) show a composition bias toward low complexity. The span at 545 to 555 (TASSSSSPTLQ) shows a compositional bias: polar residues. A compositionally biased stretch (low complexity) spans 556–569 (ATKTTTTTTTTTTT). The FERM domain occupies 637 to 934 (ILVHISLVDQ…GYKYFIQHDE (298 aa)). LRR repeat units follow at residues 1017-1040 (KVEL…LKDT), 1053-1075 (ENLN…AFEP), 1087-1110 (HLNL…IEKY), 1111-1133 (PNIE…VILR), 1167-1191 (NKTI…IFEG), 1196-1219 (SLSL…KFIK), 1254-1278 (SCHI…VIKG), 1282-1306 (NQTI…LCQS), 1339-1362 (NKTI…AIGT), 1367-1391 (NETL…ILNG), 1395-1418 (NSTI…SLAN), 1428-1450 (VITL…QLST), and 1451-1474 (NIPI…IKNA).

The protein is FERM domain-containing protein C (frmC) of Dictyostelium discoideum (Social amoeba).